The sequence spans 188 residues: Elongation factor P (188 aa).

It belongs to the elongation factor P family.

The protein resides in the cytoplasm. It participates in protein biosynthesis; polypeptide chain elongation. Its function is as follows. Involved in peptide bond synthesis. Stimulates efficient translation and peptide-bond synthesis on native or reconstituted 70S ribosomes in vitro. Probably functions indirectly by altering the affinity of the ribosome for aminoacyl-tRNA, thus increasing their reactivity as acceptors for peptidyl transferase. The polypeptide is Elongation factor P (Streptomyces avermitilis (strain ATCC 31267 / DSM 46492 / JCM 5070 / NBRC 14893 / NCIMB 12804 / NRRL 8165 / MA-4680)).